The following is a 285-amino-acid chain: E2F-associated phosphoprotein (285 aa).

An N-acetylmethionine modification is found at M1. The tract at residues M1–V30 is disordered. Residues E15–V30 are compositionally biased toward acidic residues. S17 bears the Phosphoserine mark. Residue T37 is modified to Phosphothreonine. Positions C48 to T96 are disordered. Over residues S55–A67 the composition is skewed to acidic residues. The segment covering S81–G92 has biased composition (low complexity). Residues S109 and S111 each carry the phosphoserine modification. A disordered region spans residues V118–D144. Residues T121–K130 are compositionally biased toward basic residues.

As to quaternary structure, interacts with E2F1. The C-terminal half binds the N-terminal of E2F1. Also interacts with E2F2 and E2F3, but not E2F4. In terms of tissue distribution, ubiquitously expressed. Highest levels in heart, placenta, skeletal muscle and pancreas. Lower levels in brain, lung and kidney. In the brain, expressed in all regions with high levels in the cerebellum and cerebral cortex. Expressed in COS1 and transformed skin fibroblasts.

The protein localises to the cytoplasm. It is found in the nucleus. In terms of biological role, may play an important role in the fine-tuning of both major E2F1 activities, the regulation of the cell-cycle and the induction of apoptosis. Promotes S-phase entry, and inhibits p14(ARP) expression. This is E2F-associated phosphoprotein (EAPP) from Homo sapiens (Human).